We begin with the raw amino-acid sequence, 635 residues long: Probable Xaa-Pro aminopeptidase P (635 aa).

Residues aspartate 432, aspartate 443, glutamate 541, and glutamate 555 each contribute to the Mn(2+) site.

It belongs to the peptidase M24B family. It depends on Mn(2+) as a cofactor.

It catalyses the reaction Release of any N-terminal amino acid, including proline, that is linked to proline, even from a dipeptide or tripeptide.. Functionally, catalyzes the removal of a penultimate prolyl residue from the N-termini of peptides. This is Probable Xaa-Pro aminopeptidase P (AMPP) from Arthroderma gypseum (strain ATCC MYA-4604 / CBS 118893) (Microsporum gypseum).